A 371-amino-acid chain; its full sequence is UDP-N-acetylglucosamine--N-acetylmuramyl-(pentapeptide) pyrophosphoryl-undecaprenol N-acetylglucosamine transferase (371 aa).

UDP-N-acetyl-alpha-D-glucosamine-binding positions include 10-12 (TGG), Asn-124, Arg-165, Ser-191, Ile-246, and Gln-291.

This sequence belongs to the glycosyltransferase 28 family. MurG subfamily.

It is found in the cell inner membrane. The catalysed reaction is di-trans,octa-cis-undecaprenyl diphospho-N-acetyl-alpha-D-muramoyl-L-alanyl-D-glutamyl-meso-2,6-diaminopimeloyl-D-alanyl-D-alanine + UDP-N-acetyl-alpha-D-glucosamine = di-trans,octa-cis-undecaprenyl diphospho-[N-acetyl-alpha-D-glucosaminyl-(1-&gt;4)]-N-acetyl-alpha-D-muramoyl-L-alanyl-D-glutamyl-meso-2,6-diaminopimeloyl-D-alanyl-D-alanine + UDP + H(+). The protein operates within cell wall biogenesis; peptidoglycan biosynthesis. Cell wall formation. Catalyzes the transfer of a GlcNAc subunit on undecaprenyl-pyrophosphoryl-MurNAc-pentapeptide (lipid intermediate I) to form undecaprenyl-pyrophosphoryl-MurNAc-(pentapeptide)GlcNAc (lipid intermediate II). This chain is UDP-N-acetylglucosamine--N-acetylmuramyl-(pentapeptide) pyrophosphoryl-undecaprenol N-acetylglucosamine transferase, found in Geobacter sp. (strain M21).